The chain runs to 83 residues: Delta-conotoxin-like Ac6.1 (83 aa).

A signal peptide spans Met-1–Ala-22. The propeptide occupies Asp-23–Arg-51. Intrachain disulfides connect Cys-54-Cys-69, Cys-61-Cys-73, and Cys-68-Cys-78. 2 positions are modified to 4-hydroxyproline: Pro-57 and Pro-65.

It belongs to the conotoxin O1 superfamily. As to expression, expressed by the venom duct.

The protein resides in the secreted. Its function is as follows. Delta-conotoxins bind to site 6 of voltage-gated sodium channels (Nav) and inhibit the inactivation process. The protein is Delta-conotoxin-like Ac6.1 of Conus achatinus (Little frog cone).